Consider the following 231-residue polypeptide: Ribosomal RNA large subunit methyltransferase E (231 aa).

G76, W78, D99, D115, and D139 together coordinate S-adenosyl-L-methionine. The Proton acceptor role is filled by K179.

Belongs to the class I-like SAM-binding methyltransferase superfamily. RNA methyltransferase RlmE family.

It localises to the cytoplasm. The catalysed reaction is uridine(2552) in 23S rRNA + S-adenosyl-L-methionine = 2'-O-methyluridine(2552) in 23S rRNA + S-adenosyl-L-homocysteine + H(+). Specifically methylates the uridine in position 2552 of 23S rRNA at the 2'-O position of the ribose in the fully assembled 50S ribosomal subunit. The sequence is that of Ribosomal RNA large subunit methyltransferase E from Bradyrhizobium sp. (strain BTAi1 / ATCC BAA-1182).